Reading from the N-terminus, the 180-residue chain is Stathmin-3 (180 aa).

Residues Cys22 and Cys24 are each lipidated (S-palmitoyl cysteine). One can recognise an SLD domain in the interval 38–180 (GDMEVKQLDK…NKEQREEMSG (143 aa)). A phosphoserine mark is found at Ser50, Ser60, Ser65, Ser68, Ser72, Ser73, and Ser81. Residues 60–74 (SPSDLSPESPVLSSP) are compositionally biased toward low complexity. Residues 60–81 (SPSDLSPESPVLSSPPKRKDAS) form a disordered region. Positions 75-179 (PKRKDASLEE…RNKEQREEMS (105 aa)) form a coiled coil.

This sequence belongs to the stathmin family. Interacts with STAT3. Interacts with CLU (secreted form); this interaction may act as an important modulator during neuronal differentiation. Post-translationally, N-terminal palmitoylation promotes specific anchoring to the cytosolic leaflet of Golgi membranes and subsequent vesicular trafficking along dendrites and axons. Neuronal Stathmins are substrates for palmitoyltransferases ZDHHC3, ZDHHC7 and ZDHHC15. As to expression, neuron specific.

The protein resides in the golgi apparatus. It localises to the cell projection. Its subcellular location is the growth cone. It is found in the axon. The protein localises to the cytoplasm. The protein resides in the cytosol. Functionally, exhibits microtubule-destabilizing activity, which is antagonized by STAT3. This is Stathmin-3 (Stmn3) from Mus musculus (Mouse).